Consider the following 829-residue polypeptide: E3 ubiquitin-protein ligase Jade-2 (829 aa).

Positions 1 to 52 (MEEKRRKYSISSDNSDTTDGHVTSTSASRCSKLPSSTKSGWPRQNEKKPSEV) are disordered. Ser-9 and Ser-15 each carry phosphoserine. Positions 9–39 (SISSDNSDTTDGHVTSTSASRCSKLPSSTKS) are enriched in polar residues. N6-acetyllysine is present on residues Lys-32 and Lys-38. Ser-117 carries the phosphoserine modification. Residues 199-249 (DVVCDVCRSPEGEDGNEMVFCDKCNVCVHQACYGILKVPTGSWLCRTCALG) form a PHD-type 1 zinc finger. The C2HC pre-PHD-type zinc finger occupies 251–285 (QPKCLLCPKRGGALKPTRSGTKWVHVSCALWIPEV). Lys-298 carries the post-translational modification N6-acetyllysine. The PHD-type 2 zinc-finger motif lies at 309-365 (LSCSLCKECTGTCIQCSMPSCITAFHVTCAFDRGLEMRTILADNDEVKFKSLCQEHS). 3 disordered regions span residues 362–383 (QEHSDGGPRSEPTSEPVEPSQA), 517–555 (REPSGRRSKGKKNDSKRKGREGPKGSSPEKKEKVKAGPE), and 622–817 (SFMR…REAG). Over residues 522–535 (RRSKGKKNDSKRKG) the composition is skewed to basic residues. Over residues 536-552 (REGPKGSSPEKKEKVKA) the composition is skewed to basic and acidic residues. The span at 637–650 (KARGRTRLPAKKKP) shows a compositional bias: basic residues. Positions 776-786 (ERPKVSLHFDT) are enriched in basic and acidic residues. Residues 792–806 (FSDEEMSDSEVEAED) are compositionally biased toward acidic residues.

The protein belongs to the JADE family. Component of the HBO1 complex composed at least of ING4 or ING5, MYST2/HBO1, MEAF6, and one of JADE1, JADE2 and JADE3. Interacts (via C-terminus) with KDM1A (via AOD/Tower domain).

The enzyme catalyses S-ubiquitinyl-[E2 ubiquitin-conjugating enzyme]-L-cysteine + [acceptor protein]-L-lysine = [E2 ubiquitin-conjugating enzyme]-L-cysteine + N(6)-ubiquitinyl-[acceptor protein]-L-lysine.. It participates in protein modification; protein ubiquitination. Its function is as follows. Scaffold subunit of some HBO1 complexes, which have a histone H4 acetyltransferase activity. Acts as a E3 ubiquitin-protein ligase mediating the ubiquitination and subsequent proteasomal degradation of target protein histone demethylase KDM1A. Also acts as a ubiquitin ligase E3 toward itself. Positive regulator of neurogenesis. The sequence is that of E3 ubiquitin-protein ligase Jade-2 (Jade2) from Mus musculus (Mouse).